The following is a 644-amino-acid chain: Probable potassium transport system protein Kup (644 aa).

The next 12 helical transmembrane spans lie at glycine 10–glycine 30, isoleucine 56–isoleucine 76, tryptophan 106–threonine 126, proline 143–valine 163, phenylalanine 175–valine 195, phenylalanine 212–threonine 232, alanine 252–leucine 272, proline 282–alanine 302, isoleucine 343–phenylalanine 363, phenylalanine 371–valine 391, alanine 403–leucine 423, and phenylalanine 425–threonine 445.

The protein belongs to the HAK/KUP transporter (TC 2.A.72) family.

It is found in the cell inner membrane. It catalyses the reaction K(+)(in) + H(+)(in) = K(+)(out) + H(+)(out). Its function is as follows. Transport of potassium into the cell. Likely operates as a K(+):H(+) symporter. In Acidithiobacillus ferrooxidans (strain ATCC 23270 / DSM 14882 / CIP 104768 / NCIMB 8455) (Ferrobacillus ferrooxidans (strain ATCC 23270)), this protein is Probable potassium transport system protein Kup.